Reading from the N-terminus, the 734-residue chain is Cullin-4 (734 aa).

Positions aspartate 666 to aspartate 728 constitute a Cullin neddylation domain. Lysine 680 is covalently cross-linked (Glycyl lysine isopeptide (Lys-Gly) (interchain with G-Cter in NEDD8)).

The protein belongs to the cullin family. As to quaternary structure, component of the Clr4 methyltransferase complex (ClrC) composed of at least clr4, rik1, pcu4, rbx1, raf1 and raf2. The cullin pcu4, rik1, raf1, raf2 and the ring-box protein rbx1 are components of an E3 ubiquitin ligase, whose activity is essential for heterochromatin assembly. Neddylated; enhancing the ubiquitin-ligase activity.

Its subcellular location is the cytoplasm. It is found in the nucleus. The protein resides in the chromosome. The protein operates within protein modification; protein ubiquitination. Functionally, required, indirectly, for activation of ribonucleotide reductase through the degradation of the protein spd1, thereby supplying deoxyribonucleotides for DNA replication and repair. Also has a role as a scaffold for assembling ubiquitin ligases. Component of the Clr4 methyltransferase complex (ClrC) which contributes to the establishment of heterochromatin by specifically methylating histone H3 to form H3K9me. ClrC preferentially ubiquitylates H3K14 and ClrC-mediated H3 ubiquitination promotes clr4 methyltransferase activity for the methylation of H3K9. H3K9me represents a specific tag for epigenetic transcriptional repression by recruiting swi6/HP1 to methylated histones which leads to transcriptional silencing within centromeric heterochromatin, telomeric regions and at the silent mating-type loci. In Schizosaccharomyces pombe (strain 972 / ATCC 24843) (Fission yeast), this protein is Cullin-4 (pcu4).